A 4568-amino-acid polypeptide reads, in one-letter code: Dynein beta chain, flagellar outer arm (4568 aa).

The tract at residues 1–1880 (MAEDEGMTAA…QVNICDAEIA (1880 aa)) is stem. Coiled coils occupy residues 277–293 (FQRL…EAND), 1158–1175 (EEAA…RKAL), 1372–1400 (KIDV…RNYD), 1614–1650 (EACT…RVAF), and 1778–1825 (QEIN…RKKL). A disordered region spans residues 1144-1166 (GVEEEPEYHPDQDPEEAAAKKAA). The segment covering 1150 to 1166 (EYHPDQDPEEAAAKKAA) has biased composition (basic and acidic residues). 4 AAA regions span residues 1881-2102 (YSYE…TLYV), 2164-2385 (EAAH…RNFK), 2493-2738 (QYIP…ITQG), and 2841-3090 (EYNE…FRRY). ATP is bound by residues 1919–1926 (GPAGTGKT), 2202–2209 (GAAGCGKT), and 2530–2537 (GNTGTGKS). Residues 2831 to 2848 (LRKTLEDKLREYNESNAV) are a coiled coil. 2879 to 2886 (GVGGSGKQ) contacts ATP. Coiled coils occupy residues 3106 to 3162 (KMLL…DELI), 3339 to 3425 (KRAA…RLES), and 3648 to 3728 (HERP…KARE). Residues 3106 to 3425 (KMLLQLKRDD…WGAEIKRLES (320 aa)) form a stalk region. AAA stretches follow at residues 3481–3711 (LTDD…EIEE) and 3937–4172 (MGRF…TANN).

The protein belongs to the dynein heavy chain family. Consists of at least 3 heavy chains (alpha, beta and gamma), 2 intermediate chains and 8 light chains.

Its subcellular location is the cell projection. It is found in the cilium. It localises to the flagellum. The protein resides in the cytoplasm. The protein localises to the cytoskeleton. Its subcellular location is the flagellum axoneme. Force generating protein of eukaryotic cilia and flagella. Produces force towards the minus ends of microtubules. Dynein has ATPase activity; the force-producing power stroke is thought to occur on release of ADP. The polypeptide is Dynein beta chain, flagellar outer arm (ODA4) (Chlamydomonas reinhardtii (Chlamydomonas smithii)).